The following is an 877-amino-acid chain: Putative leucine-rich repeat receptor-like serine/threonine-protein kinase At2g19230 (877 aa).

A signal peptide spans 1-24; it reads MGNFNFLPLVSFASFVVVLVLVCA. Residues 25-517 are Extracellular-facing; sequence QDQSGFVSID…RNKKTERKEY (493 aa). Residues asparagine 142, asparagine 233, asparagine 261, asparagine 295, asparagine 405, and asparagine 420 are each glycosylated (N-linked (GlcNAc...) asparagine). LRR repeat units follow at residues 439-462 and 463-484; these read PLQKLDLSNNRLTGTVPDFLANLP and DLTELNLEENKLTGILPEKLLE. Residues 518–538 form a helical membrane-spanning segment; the sequence is IIPSVASVTGLFFLLLALISF. The Cytoplasmic segment spans residues 539 to 877; the sequence is WQFKKRQQSV…VDPGVLPQPR (339 aa). The 274-residue stretch at 569–842 folds into the Protein kinase domain; it reads NNFERVLGQG…QVVAELKESL (274 aa). Residues 575–583 and lysine 596 contribute to the ATP site; that span reads LGQGGFGKV. Tyrosine 641 bears the Phosphotyrosine mark. Aspartate 692 acts as the Proton acceptor in catalysis. Serine 726 bears the Phosphoserine mark. Threonine 727 and threonine 732 each carry phosphothreonine.

It belongs to the protein kinase superfamily. Ser/Thr protein kinase family.

Its subcellular location is the cell membrane. It carries out the reaction L-seryl-[protein] + ATP = O-phospho-L-seryl-[protein] + ADP + H(+). It catalyses the reaction L-threonyl-[protein] + ATP = O-phospho-L-threonyl-[protein] + ADP + H(+). In Arabidopsis thaliana (Mouse-ear cress), this protein is Putative leucine-rich repeat receptor-like serine/threonine-protein kinase At2g19230.